Reading from the N-terminus, the 1843-residue chain is GTPase-activating protein CdGAPr (1843 aa).

The tract at residues Ala-94 to Met-117 is disordered. Phosphoserine is present on residues Ser-166, Ser-168, and Ser-180. Residues Pro-295–Asp-363 form the SH3 domain. The 195-residue stretch at Cys-424–Phe-618 folds into the Rho-GAP domain. The interval Pro-746–Thr-780 is disordered. Residues Ser-759 to Gly-771 show a composition bias toward polar residues. Ser-837 and Ser-840 each carry phosphoserine. Phosphothreonine is present on Thr-843. Residues Ser-851, Ser-861, Ser-872, and Ser-876 each carry the phosphoserine modification. 2 disordered regions span residues Glu-894–Ser-975 and Ala-1013–Pro-1106. Over residues Phe-928–Pro-939 the composition is skewed to polar residues. A Phosphoserine modification is found at Ser-1029. The span at Ser-1029–Val-1053 shows a compositional bias: low complexity. The segment covering Lys-1058–Phe-1069 has biased composition (basic and acidic residues). Residues Tyr-1071–Ala-1097 are compositionally biased toward polar residues. Residues Thr-1118 and Thr-1121 each carry the phosphothreonine modification. Ser-1125, Ser-1216, Ser-1281, and Ser-1284 each carry phosphoserine. Positions Tyr-1378–Glu-1404 form a coiled coil. Phosphoserine is present on residues Ser-1453 and Ser-1456. The residue at position 1679 (Thr-1679) is a Phosphothreonine. Disordered stretches follow at residues Thr-1721 to Gln-1745 and Thr-1779 to Ile-1829. The span at Thr-1779–Pro-1790 shows a compositional bias: polar residues. Positions Lys-1793 to Gln-1806 are enriched in basic and acidic residues. Positions Arg-1807–Asn-1818 are enriched in polar residues.

Ubiquitously expressed.

In terms of biological role, probably functions as a GTPase-activating protein (GAP) for RAC1 and/or CDC42. Required for optic stalk formation. The polypeptide is GTPase-activating protein CdGAPr (CdGAPr) (Drosophila melanogaster (Fruit fly)).